Here is a 505-residue protein sequence, read N- to C-terminus: Aspartyl/glutamyl-tRNA(Asn/Gln) amidotransferase subunit B (505 aa).

Belongs to the GatB/GatE family. GatB subfamily. In terms of assembly, heterotrimer of A, B and C subunits.

The catalysed reaction is L-glutamyl-tRNA(Gln) + L-glutamine + ATP + H2O = L-glutaminyl-tRNA(Gln) + L-glutamate + ADP + phosphate + H(+). It catalyses the reaction L-aspartyl-tRNA(Asn) + L-glutamine + ATP + H2O = L-asparaginyl-tRNA(Asn) + L-glutamate + ADP + phosphate + 2 H(+). In terms of biological role, allows the formation of correctly charged Asn-tRNA(Asn) or Gln-tRNA(Gln) through the transamidation of misacylated Asp-tRNA(Asn) or Glu-tRNA(Gln) in organisms which lack either or both of asparaginyl-tRNA or glutaminyl-tRNA synthetases. The reaction takes place in the presence of glutamine and ATP through an activated phospho-Asp-tRNA(Asn) or phospho-Glu-tRNA(Gln). The protein is Aspartyl/glutamyl-tRNA(Asn/Gln) amidotransferase subunit B of Corynebacterium jeikeium (strain K411).